A 417-amino-acid polypeptide reads, in one-letter code: Gamma-glutamyl phosphate reductase (417 aa).

This sequence belongs to the gamma-glutamyl phosphate reductase family.

The protein resides in the cytoplasm. It catalyses the reaction L-glutamate 5-semialdehyde + phosphate + NADP(+) = L-glutamyl 5-phosphate + NADPH + H(+). Its pathway is amino-acid biosynthesis; L-proline biosynthesis; L-glutamate 5-semialdehyde from L-glutamate: step 2/2. Its function is as follows. Catalyzes the NADPH-dependent reduction of L-glutamate 5-phosphate into L-glutamate 5-semialdehyde and phosphate. The product spontaneously undergoes cyclization to form 1-pyrroline-5-carboxylate. This Enterococcus faecalis (strain ATCC 700802 / V583) protein is Gamma-glutamyl phosphate reductase.